The sequence spans 61 residues: Large ribosomal subunit protein uL30 (61 aa).

Belongs to the universal ribosomal protein uL30 family. Part of the 50S ribosomal subunit.

The sequence is that of Large ribosomal subunit protein uL30 from Parafrankia sp. (strain EAN1pec).